A 207-amino-acid chain; its full sequence is Octanoyltransferase (207 aa).

Positions 27 to 203 (ADTEDELWVV…HLETQLTPKA (177 aa)) constitute a BPL/LPL catalytic domain. Substrate is bound by residues 66-73 (RGGQITYH), 133-135 (SLG), and 146-148 (GLA). Cys-164 acts as the Acyl-thioester intermediate in catalysis.

Belongs to the LipB family.

The protein resides in the cytoplasm. It carries out the reaction octanoyl-[ACP] + L-lysyl-[protein] = N(6)-octanoyl-L-lysyl-[protein] + holo-[ACP] + H(+). It participates in protein modification; protein lipoylation via endogenous pathway; protein N(6)-(lipoyl)lysine from octanoyl-[acyl-carrier-protein]: step 1/2. Catalyzes the transfer of endogenously produced octanoic acid from octanoyl-acyl-carrier-protein onto the lipoyl domains of lipoate-dependent enzymes. Lipoyl-ACP can also act as a substrate although octanoyl-ACP is likely to be the physiological substrate. This chain is Octanoyltransferase, found in Neisseria gonorrhoeae (strain ATCC 700825 / FA 1090).